The following is a 152-amino-acid chain: Xanthine-guanine phosphoribosyltransferase (152 aa).

5-phospho-alpha-D-ribose 1-diphosphate contacts are provided by residues 37-38 (RG), Arg69, and 88-96 (DDLVDTGGT). Position 69 (Arg69) interacts with GMP. Asp89 serves as a coordination point for Mg(2+). 2 residues coordinate guanine: Asp92 and Ile135. Xanthine contacts are provided by Asp92 and Ile135. Residues 92–96 (DTGGT) and 134–135 (WI) each bind GMP.

It belongs to the purine/pyrimidine phosphoribosyltransferase family. XGPT subfamily. In terms of assembly, homotetramer. Mg(2+) is required as a cofactor.

The protein localises to the cell inner membrane. It catalyses the reaction GMP + diphosphate = guanine + 5-phospho-alpha-D-ribose 1-diphosphate. The catalysed reaction is XMP + diphosphate = xanthine + 5-phospho-alpha-D-ribose 1-diphosphate. It carries out the reaction IMP + diphosphate = hypoxanthine + 5-phospho-alpha-D-ribose 1-diphosphate. It functions in the pathway purine metabolism; GMP biosynthesis via salvage pathway; GMP from guanine: step 1/1. The protein operates within purine metabolism; XMP biosynthesis via salvage pathway; XMP from xanthine: step 1/1. Its function is as follows. Purine salvage pathway enzyme that catalyzes the transfer of the ribosyl-5-phosphate group from 5-phospho-alpha-D-ribose 1-diphosphate (PRPP) to the N9 position of the 6-oxopurines guanine and xanthine to form the corresponding ribonucleotides GMP (guanosine 5'-monophosphate) and XMP (xanthosine 5'-monophosphate), with the release of PPi. To a lesser extent, also acts on hypoxanthine. This chain is Xanthine-guanine phosphoribosyltransferase, found in Pectobacterium carotovorum subsp. carotovorum (strain PC1).